The chain runs to 277 residues: Tryptophan synthase alpha chain (277 aa).

Catalysis depends on proton acceptor residues E59 and D70.

It belongs to the TrpA family. Tetramer of two alpha and two beta chains.

The catalysed reaction is (1S,2R)-1-C-(indol-3-yl)glycerol 3-phosphate + L-serine = D-glyceraldehyde 3-phosphate + L-tryptophan + H2O. It functions in the pathway amino-acid biosynthesis; L-tryptophan biosynthesis; L-tryptophan from chorismate: step 5/5. The alpha subunit is responsible for the aldol cleavage of indoleglycerol phosphate to indole and glyceraldehyde 3-phosphate. This chain is Tryptophan synthase alpha chain, found in Streptomyces avermitilis (strain ATCC 31267 / DSM 46492 / JCM 5070 / NBRC 14893 / NCIMB 12804 / NRRL 8165 / MA-4680).